The chain runs to 264 residues: 5'-nucleotidase SurE (264 aa).

A divalent metal cation-binding residues include Asp8, Asp9, Ser39, and Asn95.

This sequence belongs to the SurE nucleotidase family. A divalent metal cation is required as a cofactor.

It localises to the cytoplasm. It catalyses the reaction a ribonucleoside 5'-phosphate + H2O = a ribonucleoside + phosphate. Nucleotidase that shows phosphatase activity on nucleoside 5'-monophosphates. In Syntrophomonas wolfei subsp. wolfei (strain DSM 2245B / Goettingen), this protein is 5'-nucleotidase SurE.